Reading from the N-terminus, the 187-residue chain is Peptide deformylase 2 (187 aa).

The Fe cation site is built by Cys-107 and His-149. Glu-150 is an active-site residue. His-153 provides a ligand contact to Fe cation.

This sequence belongs to the polypeptide deformylase family. Fe(2+) is required as a cofactor.

It carries out the reaction N-terminal N-formyl-L-methionyl-[peptide] + H2O = N-terminal L-methionyl-[peptide] + formate. Its function is as follows. Removes the formyl group from the N-terminal Met of newly synthesized proteins. Requires at least a dipeptide for an efficient rate of reaction. N-terminal L-methionine is a prerequisite for activity but the enzyme has broad specificity at other positions. This Gloeobacter violaceus (strain ATCC 29082 / PCC 7421) protein is Peptide deformylase 2.